The following is a 119-amino-acid chain: Polyhedrin (119 aa).

It belongs to the polyhedrin family.

In terms of biological role, major component of the virus occlusion bodies, which are large proteinaceous structures (polyhedra), that protect the virus from the outside environment for extended periods until they are ingested by insect larvae. The polypeptide is Polyhedrin (PH) (Antheraea pernyi nuclear polyhedrosis virus (ApNPV)).